Consider the following 707-residue polypeptide: Matrix metalloproteinase-9 (707 aa).

The N-terminal stretch at 1-19 (MSPRQPLVLALLVLGCCSA) is a signal peptide. A propeptide spans 20–106 (APRRRQPTLV…PRCGVPDVGK (87 aa)) (activation peptide). An N-linked (GlcNAc...) asparagine glycan is attached at N88. A Cysteine switch motif is present at residues 97–104 (PRCGVPDV). Position 99 (C99) interacts with Zn(2+). N-linked (GlcNAc...) asparagine glycosylation is found at N120 and N127. D131 and D165 together coordinate Ca(2+). Positions 175 and 177 each coordinate Zn(2+). Ca(2+) contacts are provided by D182, G183, D185, and L187. H190 is a Zn(2+) binding site. Ca(2+) is bound by residues G197, Q199, and D201. H203 contributes to the Zn(2+) binding site. Positions 205, 206, and 208 each coordinate Ca(2+). 3 consecutive Fibronectin type-II domains span residues 225–273 (ADGA…FCPS), 283–331 (ADGK…FCPT), and 342–390 (SAGE…FCPD). Intrachain disulfides connect C230-C256, C244-C271, C288-C314, C302-C329, C347-C373, and C361-C388. H401 contacts Zn(2+). E402 is an active-site residue. Residues H405 and H411 each contribute to the Zn(2+) site. Residues 437-508 (RGIQHLYGPN…ASPSAAPTAS (72 aa)) are disordered. The span at 446–467 (NPNPQPPATTTPEPQPTAPPTA) shows a compositional bias: pro residues. The segment covering 481-493 (PTTSPTGAPSAGP) has biased composition (low complexity). Cysteines 516 and 704 form a disulfide. 4 Hemopexin repeats span residues 518 to 563 (VNVF…WPAL), 564 to 608 (PAKL…GLGP), 610 to 657 (VPHV…FPGV), and 658 to 704 (PLNT…ILHC).

The protein belongs to the peptidase M10A family. Exists as monomer or homodimer; disulfide-linked. Also exists as heterodimer with LCN2. Macrophages and transformed cell lines produce only the monomeric form. Interacts with ECM1. Zn(2+) serves as cofactor. Requires Ca(2+) as cofactor. Post-translationally, N- and O-glycosylated. Osteoclasts.

The protein localises to the secreted. Its subcellular location is the extracellular space. The protein resides in the extracellular matrix. The catalysed reaction is Cleavage of gelatin types I and V and collagen types IV and V.. Its function is as follows. Matrix metalloproteinase that plays an essential role in local proteolysis of the extracellular matrix and in leukocyte migration. Could play a role in bone osteoclastic resorption. Cleaves KiSS1 at a Gly-|-Leu bond. Cleaves NINJ1 to generate the Secreted ninjurin-1 form. Cleaves type IV and type V collagen into large C-terminal three quarter fragments and shorter N-terminal one quarter fragments. Degrades fibronectin but not laminin or Pz-peptide. The sequence is that of Matrix metalloproteinase-9 from Oryctolagus cuniculus (Rabbit).